Reading from the N-terminus, the 201-residue chain is dITP/XTP pyrophosphatase (201 aa).

8-13 (TNNENK) contributes to the substrate binding site. The Mg(2+) site is built by E41 and D73. D73 acts as the Proton acceptor in catalysis. Substrate is bound by residues S74, 154-157 (FGYD), K177, and 182-183 (HR).

The protein belongs to the HAM1 NTPase family. As to quaternary structure, homodimer. Requires Mg(2+) as cofactor.

The catalysed reaction is XTP + H2O = XMP + diphosphate + H(+). The enzyme catalyses dITP + H2O = dIMP + diphosphate + H(+). It catalyses the reaction ITP + H2O = IMP + diphosphate + H(+). Its function is as follows. Pyrophosphatase that catalyzes the hydrolysis of nucleoside triphosphates to their monophosphate derivatives, with a high preference for the non-canonical purine nucleotides XTP (xanthosine triphosphate), dITP (deoxyinosine triphosphate) and ITP. Seems to function as a house-cleaning enzyme that removes non-canonical purine nucleotides from the nucleotide pool, thus preventing their incorporation into DNA/RNA and avoiding chromosomal lesions. This chain is dITP/XTP pyrophosphatase, found in Clostridium tetani (strain Massachusetts / E88).